The sequence spans 83 residues: MSSGGLLLLLGLLTLWEILTPVSSKDRPHFCHLPHDTGPCNRNTQAFYYNPVYHTCLKFIYGGCQGNSNNFKTIDECKRTCAA.

Residues 1-24 (MSSGGLLLLLGLLTLWEILTPVSS) form the signal peptide. Residues 31 to 81 (CHLPHDTGPCNRNTQAFYYNPVYHTCLKFIYGGCQGNSNNFKTIDECKRTC) enclose the BPTI/Kunitz inhibitor domain. Intrachain disulfides connect C31-C81, C40-C64, and C56-C77.

The protein belongs to the venom Kunitz-type family. Expressed by the venom gland.

The protein localises to the secreted. Functionally, serine protease inhibitor. The polypeptide is Kunitz-type serine protease inhibitor tigerin-3 (Notechis scutatus scutatus (Mainland tiger snake)).